A 108-amino-acid polypeptide reads, in one-letter code: Parvalbumin alpha (108 aa).

Ala1 carries the post-translational modification N-acetylalanine. EF-hand domains follow at residues 37–72 (MSANDVKKVFKAIDADASGFIEEEELKFVLKSFAAD) and 76–108 (LTDAETKAFLKAADKDGDGKIGIDEFETLVHEA). 11 residues coordinate Ca(2+): Asp50, Asp52, Ser54, Phe56, Glu58, Glu61, Asp89, Asp91, Asp93, Lys95, and Glu100.

Belongs to the parvalbumin family.

Its function is as follows. In muscle, parvalbumin is thought to be involved in relaxation after contraction. It binds two calcium ions. The polypeptide is Parvalbumin alpha (Esox lucius (Northern pike)).